Here is a 243-residue protein sequence, read N- to C-terminus: 7-cyano-7-deazaguanine synthase (243 aa).

ATP is bound at residue 14-24; the sequence is FSGGQDSATCL. Cys-202, Cys-217, Cys-220, and Cys-223 together coordinate Zn(2+).

It belongs to the QueC family. Zn(2+) serves as cofactor.

The catalysed reaction is 7-carboxy-7-deazaguanine + NH4(+) + ATP = 7-cyano-7-deazaguanine + ADP + phosphate + H2O + H(+). It functions in the pathway purine metabolism; 7-cyano-7-deazaguanine biosynthesis. In terms of biological role, catalyzes the ATP-dependent conversion of 7-carboxy-7-deazaguanine (CDG) to 7-cyano-7-deazaguanine (preQ(0)). In Paraburkholderia phymatum (strain DSM 17167 / CIP 108236 / LMG 21445 / STM815) (Burkholderia phymatum), this protein is 7-cyano-7-deazaguanine synthase.